A 194-amino-acid chain; its full sequence is MPKLILASTSPWRRALLEKLQISFECAAPEVDETPRSDESPRQLVLRLAQEKAQSLASRYPDHLIIGSDQVCVLDGEITGKPLTEENARLQLRKASGNIVTFYTGLALFNSANGHLQTEVEPFDVHFRHLCEAEIDNYVRKEHPLHCAGSFKSEGFGITLFERLEGRDPNTLVGLPLIALCQMLRREGKNPLMG.

Residue aspartate 69 is the Proton acceptor of the active site.

The protein belongs to the Maf family. YceF subfamily. Requires a divalent metal cation as cofactor.

Its subcellular location is the cytoplasm. The catalysed reaction is N(7)-methyl-GTP + H2O = N(7)-methyl-GMP + diphosphate + H(+). Functionally, nucleoside triphosphate pyrophosphatase that hydrolyzes 7-methyl-GTP (m(7)GTP). May have a dual role in cell division arrest and in preventing the incorporation of modified nucleotides into cellular nucleic acids. The polypeptide is 7-methyl-GTP pyrophosphatase (yceF1) (Shigella boydii serotype 4 (strain Sb227)).